Reading from the N-terminus, the 225-residue chain is UPF0758 protein AZOSEA04420 (225 aa).

In terms of domain architecture, MPN spans 102–225 (VFESPLAVRN…PLSFAERGLL (124 aa)). Zn(2+) contacts are provided by H173, H175, and D186. Residues 173 to 186 (HNHPSGAAEPSPAD) carry the JAMM motif motif.

Belongs to the UPF0758 family.

In Aromatoleum aromaticum (strain DSM 19018 / LMG 30748 / EbN1) (Azoarcus sp. (strain EbN1)), this protein is UPF0758 protein AZOSEA04420.